The chain runs to 238 residues: Orotidine 5'-phosphate decarboxylase (238 aa).

Substrate is bound by residues Asp-10, Lys-32, 59–68 (DLKLHDIPNT), Thr-122, Arg-184, Gln-193, Gly-213, and Arg-214. The active-site Proton donor is the Lys-61.

This sequence belongs to the OMP decarboxylase family. Type 1 subfamily. As to quaternary structure, homodimer.

The enzyme catalyses orotidine 5'-phosphate + H(+) = UMP + CO2. It functions in the pathway pyrimidine metabolism; UMP biosynthesis via de novo pathway; UMP from orotate: step 2/2. Catalyzes the decarboxylation of orotidine 5'-monophosphate (OMP) to uridine 5'-monophosphate (UMP). This is Orotidine 5'-phosphate decarboxylase from Bacillus cereus (strain Q1).